The primary structure comprises 129 residues: Small ribosomal subunit protein uS11 (129 aa).

It belongs to the universal ribosomal protein uS11 family. As to quaternary structure, part of the 30S ribosomal subunit. Interacts with proteins S7 and S18. Binds to IF-3.

Located on the platform of the 30S subunit, it bridges several disparate RNA helices of the 16S rRNA. Forms part of the Shine-Dalgarno cleft in the 70S ribosome. The chain is Small ribosomal subunit protein uS11 from Staphylococcus epidermidis (strain ATCC 12228 / FDA PCI 1200).